The primary structure comprises 943 residues: Isoleucine--tRNA ligase (943 aa).

Positions 58-68 (PYANGTIHIGH) match the 'HIGH' region motif. E567 contacts L-isoleucyl-5'-AMP. A 'KMSKS' region motif is present at residues 608 to 612 (KMSKS). K611 serves as a coordination point for ATP. Residues C906, C909, C926, and C929 each contribute to the Zn(2+) site.

This sequence belongs to the class-I aminoacyl-tRNA synthetase family. IleS type 1 subfamily. Monomer. It depends on Zn(2+) as a cofactor.

It localises to the cytoplasm. It carries out the reaction tRNA(Ile) + L-isoleucine + ATP = L-isoleucyl-tRNA(Ile) + AMP + diphosphate. In terms of biological role, catalyzes the attachment of isoleucine to tRNA(Ile). As IleRS can inadvertently accommodate and process structurally similar amino acids such as valine, to avoid such errors it has two additional distinct tRNA(Ile)-dependent editing activities. One activity is designated as 'pretransfer' editing and involves the hydrolysis of activated Val-AMP. The other activity is designated 'posttransfer' editing and involves deacylation of mischarged Val-tRNA(Ile). This chain is Isoleucine--tRNA ligase, found in Pseudomonas fluorescens (strain Pf0-1).